We begin with the raw amino-acid sequence, 244 residues long: 6-carboxyhexanoate--CoA ligase (244 aa).

The protein belongs to the BioW family. In terms of assembly, homodimer. The cofactor is Mg(2+).

It catalyses the reaction heptanedioate + ATP + CoA = 6-carboxyhexanoyl-CoA + AMP + diphosphate. Its pathway is metabolic intermediate metabolism; pimeloyl-CoA biosynthesis; pimeloyl-CoA from pimelate: step 1/1. In terms of biological role, catalyzes the transformation of pimelate into pimeloyl-CoA with concomitant hydrolysis of ATP to AMP. The protein is 6-carboxyhexanoate--CoA ligase of Methanococcus maripaludis (strain DSM 14266 / JCM 13030 / NBRC 101832 / S2 / LL).